A 100-amino-acid chain; its full sequence is Putative membrane protein insertion efficiency factor (100 aa).

Residues Asp73–Gly100 form a disordered region.

Belongs to the UPF0161 family.

It localises to the cell inner membrane. Its function is as follows. Could be involved in insertion of integral membrane proteins into the membrane. This Synechococcus sp. (strain JA-3-3Ab) (Cyanobacteria bacterium Yellowstone A-Prime) protein is Putative membrane protein insertion efficiency factor.